We begin with the raw amino-acid sequence, 380 residues long: Tryptophan 2,3-dioxygenase (380 aa).

Residues 57–61 and arginine 128 each bind substrate; that span reads FIITH. Histidine 313 lines the heme pocket. Substrate is bound at residue threonine 328.

It belongs to the tryptophan 2,3-dioxygenase family. In terms of assembly, homotetramer. Dimer of dimers. Heme is required as a cofactor.

It carries out the reaction L-tryptophan + O2 = N-formyl-L-kynurenine. It participates in amino-acid degradation; L-tryptophan degradation via kynurenine pathway; L-kynurenine from L-tryptophan: step 1/2. Its pathway is pigment biosynthesis; ommochrome biosynthesis. In terms of biological role, heme-dependent dioxygenase that catalyzes the oxidative cleavage of the L-tryptophan (L-Trp) pyrrole ring and converts L-tryptophan to N-formyl-L-kynurenine. Catalyzes the oxidative cleavage of the indole moiety. The chain is Tryptophan 2,3-dioxygenase from Drosophila persimilis (Fruit fly).